The chain runs to 373 residues: Transaldolase (373 aa).

Residue K143 is the Schiff-base intermediate with substrate of the active site.

The protein belongs to the transaldolase family. Type 2 subfamily.

Its subcellular location is the cytoplasm. It catalyses the reaction D-sedoheptulose 7-phosphate + D-glyceraldehyde 3-phosphate = D-erythrose 4-phosphate + beta-D-fructose 6-phosphate. Its pathway is carbohydrate degradation; pentose phosphate pathway; D-glyceraldehyde 3-phosphate and beta-D-fructose 6-phosphate from D-ribose 5-phosphate and D-xylulose 5-phosphate (non-oxidative stage): step 2/3. In terms of biological role, transaldolase is important for the balance of metabolites in the pentose-phosphate pathway. The chain is Transaldolase from Mycolicibacterium paratuberculosis (strain ATCC BAA-968 / K-10) (Mycobacterium paratuberculosis).